A 2506-amino-acid polypeptide reads, in one-letter code: Zinc finger protein 462 (2506 aa).

3 C2H2-type zinc fingers span residues 4 to 27 (LQCDGCDFRAPSYEDLKAHIQDVH), 108 to 131 (FQCKFCVRYFRSKNLLIEHTRKVH), and 162 to 185 (FSCQFCTYKSPRRARIIKHQKMYH). A Glycyl lysine isopeptide (Lys-Gly) (interchain with G-Cter in SUMO1); alternate cross-link involves residue lysine 20. Residue lysine 20 forms a Glycyl lysine isopeptide (Lys-Gly) (interchain with G-Cter in SUMO2); alternate linkage. The interval 215–241 (PCKELPAEVVERSILESMVKPLTKSRG) is interaction with PBX1. Glycyl lysine isopeptide (Lys-Gly) (interchain with G-Cter in SUMO2) cross-links involve residues lysine 234 and lysine 271. The tract at residues 280 to 299 (QEGTNLPDVPNKSAPSPTSN) is disordered. Serine 292 and serine 309 each carry an O-linked (GlcNAc6P) serine glycan. Residues lysine 337, lysine 347, and lysine 349 each participate in a glycyl lysine isopeptide (Lys-Gly) (interchain with G-Cter in SUMO2) cross-link. The tract at residues 337–356 (KFSPMSYPQMKPKSPHNSGL) is disordered. Residues serine 350 and serine 354 each carry the phosphoserine modification. A Glycyl lysine isopeptide (Lys-Gly) (interchain with G-Cter in SUMO2) cross-link involves residue lysine 428. C2H2-type zinc fingers lie at residues 439-462 (FQCPFCPFLTMHRRSISRHIENIH) and 470-492 (YKCDECPFTCKSSLKLGAHKQCH). A Glycyl lysine isopeptide (Lys-Gly) (interchain with G-Cter in SUMO2) cross-link involves residue lysine 484. Positions 535 to 596 (DPLQQQQPPQ…QPQPPTQAAP (62 aa)) are disordered. Over residues 542-593 (PPQPPPPPPPPPPSQPQPLQQPQPPQLQPPHQVPPQPQTQPPPTQQPQPPTQ) the composition is skewed to pro residues. The C2H2-type 6 zinc finger occupies 600–623 (YKCTMCNYSTTTLKGLRVHQQHKH). Glycyl lysine isopeptide (Lys-Gly) (interchain with G-Cter in SUMO2) cross-links involve residues lysine 631, lysine 657, and lysine 668. The disordered stretch occupies residues 636–661 (PSSLPLENETDSHPSSSNTVKKSQTS). A compositionally biased stretch (polar residues) spans 648–661 (HPSSSNTVKKSQTS). Serine 688 carries the phosphoserine modification. Residues lysine 706 and aspartate 849 each participate in a glycyl lysine isopeptide (Lys-Gly) (interchain with G-Cter in SUMO2) cross-link. 3 consecutive C2H2-type zinc fingers follow at residues 843–866 (YYCKHCDFNNKSARSVSTHYQRMH), 886–908 (YRCLECYIDYTNFEDLQQHYGEH), and 925–948 (YRCRFCSYTSPNVRSLMPHYQRMH). Lysine 986 is covalently cross-linked (Glycyl lysine isopeptide (Lys-Gly) (interchain with G-Cter in SUMO2)). The C2H2-type 10 zinc-finger motif lies at 1030 to 1053 (YDCDVCSFASPNMHSVLVHYQKKH). Serine 1090 bears the Phosphoserine mark. Lysine 1135 is covalently cross-linked (Glycyl lysine isopeptide (Lys-Gly) (interchain with G-Cter in SUMO2)). A disordered region spans residues 1157–1186 (MRGVEGPQGSPRPPAPIQQLNRSSSERDGP). Serine 1166 bears the Phosphoserine mark. Glycyl lysine isopeptide (Lys-Gly) (interchain with G-Cter in SUMO2) cross-links involve residues lysine 1206, lysine 1214, lysine 1220, and lysine 1243. C2H2-type zinc fingers lie at residues 1265–1288 (LKCRQCSYTSPYFYALRKHIKKDH) and 1470–1493 (YQCTVCQSEYNNLHGLLTHYGKKH). Lysine 1499 participates in a covalent cross-link: Glycyl lysine isopeptide (Lys-Gly) (interchain with G-Cter in SUMO2). Residues 1515–1538 (YKCRHCPYINTRIHGVLTHYQKRH) form a C2H2-type 13 zinc finger. Glycyl lysine isopeptide (Lys-Gly) (interchain with G-Cter in SUMO2) cross-links involve residues lysine 1571 and lysine 1591. 3 C2H2-type zinc fingers span residues 1577-1600 (YRCKLCPYTHGTLEKLKIHYEKYH), 1660-1683 (FRCQLCKYFCSTRKGIARHYRIKH), and 1697-1720 (FKCALCAYTNPIRKGLAAHYQKRH). Glycyl lysine isopeptide (Lys-Gly) (interchain with G-Cter in SUMO2) cross-links involve residues lysine 1698 and lysine 1780. The C2H2-type 17 zinc finger occupies 1892-1914 (YQCKHCDSKLQSTAELTSHLNIH). Residue lysine 1946 forms a Glycyl lysine isopeptide (Lys-Gly) (interchain with G-Cter in SUMO2) linkage. The C2H2-type 18; degenerate zinc-finger motif lies at 1968-1992 (YKCKFCVEVHPTLRAICNHLRKHVQ). An N6-methyllysine modification is found at lysine 2004. C2H2-type zinc fingers lie at residues 2025–2048 (YSCQYCSFVSAFRHNLDRHMQTHH), 2054–2077 (FRCKLCSFKSSYNSRLKTHILKAH), and 2083–2106 (YKCSWCSFSTMTISQLKEHSLKVH). A Glycyl lysine isopeptide (Lys-Gly) (interchain with G-Cter in SUMO2) cross-link involves residue lysine 2104. Positions 2122-2152 (SSHSHHSSQKATPAEEVEDSNDSSYSEPPDV) are disordered. The span at 2143-2152 (DSSYSEPPDV) shows a compositional bias: polar residues. Phosphoserine occurs at positions 2172 and 2177. 3 consecutive C2H2-type zinc fingers follow at residues 2191 to 2214 (LHCEFCEFSSGYIQSIRRHYRDKH), 2220 to 2243 (FKCKDCSFYTGFKSAFTMHVEAGH), and 2254 to 2276 (LRCPLCLYHTKYKRNMIDHIVLH). A Glycyl lysine isopeptide (Lys-Gly) (interchain with G-Cter in SUMO2) cross-link involves residue lysine 2293. 2 consecutive C2H2-type zinc fingers follow at residues 2300–2322 (FRCDKCTFTCSSDESLQQHIEKH) and 2328–2351 (YKCQLCYYETKHTEELDSHLRDEH). The tract at residues 2371 to 2396 (MKEKMESSSSDDEDKEEEMNSKAEDR) is disordered. The segment at 2414–2436 (FPCEFCGRAFSQGSEWERHVLRH) adopts a C2H2-type 27 zinc-finger fold. Glycyl lysine isopeptide (Lys-Gly) (interchain with G-Cter in SUMO2) cross-links involve residues lysine 2444 and lysine 2504.

Interacts with PBX1; this interaction prevents PBX1-HOXA9 heterodimer from forming and binding to DNA. In terms of processing, O-GlcNAcylated with O-GlcNAc-6-phosphate.

It is found in the nucleus. Zinc finger nuclear factor involved in transcription by regulating chromatin structure and organization. Involved in the pluripotency and differentiation of embryonic stem cells by regulating SOX2, POU5F1/OCT4, and NANOG. By binding PBX1, prevents the heterodimerization of PBX1 and HOXA9 and their binding to DNA. Regulates neuronal development and neural cell differentiation. The chain is Zinc finger protein 462 from Homo sapiens (Human).